A 369-amino-acid chain; its full sequence is Dual specificity protein phosphatase 1-A (369 aa).

The Rhodanese domain maps to 21 to 138 (RAHKCLILDC…FSAQCPEFCT (118 aa)). Thr-168 carries the phosphothreonine; by MAPK1 modification. The region spanning 175–316 (GPVEILPFLY…LLQFESQVLA (142 aa)) is the Tyrosine-protein phosphatase domain. Cys-260 (phosphocysteine intermediate) is an active-site residue.

Belongs to the protein-tyrosine phosphatase family. Non-receptor class dual specificity subfamily. Phosphorylated by MAPK1/ERK2 at Thr-168 and at one or more serine residues in a progesterone-dependent manner. Phosphorylation reduces its rate of degradation but does not seem to affect phosphatase activity. As to expression, expressed in XIK-2 kidney cells.

It is found in the nucleus. It carries out the reaction O-phospho-L-seryl-[protein] + H2O = L-seryl-[protein] + phosphate. It catalyses the reaction O-phospho-L-threonyl-[protein] + H2O = L-threonyl-[protein] + phosphate. The catalysed reaction is O-phospho-L-tyrosyl-[protein] + H2O = L-tyrosyl-[protein] + phosphate. Dual specificity phosphatase that dephosphorylates MAP kinase MAPK1/ERK2 on both 'Thr-188' and 'Tyr-190', regulating its activity during the meiotic cell cycle. This chain is Dual specificity protein phosphatase 1-A, found in Xenopus laevis (African clawed frog).